We begin with the raw amino-acid sequence, 144 residues long: Large ribosomal subunit protein uL15 (144 aa).

The tract at residues 1-56 (MELNNLKPAAGAKHAKRRVGRGIGSGLGKTAGRGHKGQKSRSGGFHKVGFEGGQMP) is disordered. The segment covering 21–31 (RGIGSGLGKTA) has biased composition (gly residues).

It belongs to the universal ribosomal protein uL15 family. In terms of assembly, part of the 50S ribosomal subunit.

Functionally, binds to the 23S rRNA. The chain is Large ribosomal subunit protein uL15 from Burkholderia multivorans (strain ATCC 17616 / 249).